The following is a 575-amino-acid chain: Dihydroxy-acid dehydratase (575 aa).

The disordered stretch occupies residues 1–25 (MPTTDSARAADIKQPDIKPRSRDVT). Residues 8 to 25 (RAADIKQPDIKPRSRDVT) are compositionally biased toward basic and acidic residues. A [2Fe-2S] cluster-binding site is contributed by Cys-64. Asp-96 is a binding site for Mg(2+). Residue Cys-137 participates in [2Fe-2S] cluster binding. Mg(2+)-binding residues include Asp-138 and Lys-139. Residue Lys-139 is modified to N6-carboxylysine. Position 214 (Cys-214) interacts with [2Fe-2S] cluster. Position 465 (Glu-465) interacts with Mg(2+). The active-site Proton acceptor is the Ser-491.

This sequence belongs to the IlvD/Edd family. Homodimer. [2Fe-2S] cluster is required as a cofactor. The cofactor is Mg(2+).

It carries out the reaction (2R)-2,3-dihydroxy-3-methylbutanoate = 3-methyl-2-oxobutanoate + H2O. The catalysed reaction is (2R,3R)-2,3-dihydroxy-3-methylpentanoate = (S)-3-methyl-2-oxopentanoate + H2O. The protein operates within amino-acid biosynthesis; L-isoleucine biosynthesis; L-isoleucine from 2-oxobutanoate: step 3/4. It functions in the pathway amino-acid biosynthesis; L-valine biosynthesis; L-valine from pyruvate: step 3/4. Functionally, functions in the biosynthesis of branched-chain amino acids. Catalyzes the dehydration of (2R,3R)-2,3-dihydroxy-3-methylpentanoate (2,3-dihydroxy-3-methylvalerate) into 2-oxo-3-methylpentanoate (2-oxo-3-methylvalerate) and of (2R)-2,3-dihydroxy-3-methylbutanoate (2,3-dihydroxyisovalerate) into 2-oxo-3-methylbutanoate (2-oxoisovalerate), the penultimate precursor to L-isoleucine and L-valine, respectively. The protein is Dihydroxy-acid dehydratase of Mycobacterium avium (strain 104).